A 350-amino-acid polypeptide reads, in one-letter code: Probable aldo-keto reductase 1 (350 aa).

Tyrosine 67 (proton donor) is an active-site residue. Histidine 135 contacts substrate. Residue 214–224 (SPLGKGFFSSG) coordinates NADP(+).

The protein belongs to the aldo/keto reductase family.

In Oryza sativa subsp. indica (Rice), this protein is Probable aldo-keto reductase 1.